Consider the following 185-residue polypeptide: MPRHQNYSLSDEAAVQLVFRKYGVKVSAEQIAKAYAPEQKMSWKKSVEVARFIEGMTLRQAKSWLEDVVKMKRPIPIRTFKKKQAHHATPWSGWPVAKWPVKVARRFLDLLENLENNARFRGLDVERVVIVHAAAHKGYRIHNIMPRAFGRATRFDEQTVNVEVIAAELPQQVVPKRYRLNLVKR.

Belongs to the universal ribosomal protein uL22 family. In terms of assembly, part of the 50S ribosomal subunit.

Its function is as follows. This protein binds specifically to 23S rRNA. It makes multiple contacts with different domains of the 23S rRNA in the assembled 50S subunit and ribosome. Functionally, the globular domain of the protein is located near the polypeptide exit tunnel on the outside of the subunit, while an extended beta-hairpin is found that lines the wall of the exit tunnel in the center of the 70S ribosome. The protein is Large ribosomal subunit protein uL22 of Pyrobaculum neutrophilum (strain DSM 2338 / JCM 9278 / NBRC 100436 / V24Sta) (Thermoproteus neutrophilus).